A 392-amino-acid chain; its full sequence is p21-activated protein kinase-interacting protein 1 (392 aa).

5 WD repeats span residues 40 to 77 (AHTASLSAVAVNSRFVVTGSKDETIHIYDMKKKVDHGA), 80 to 118 (HHNGTITCLKFHGNRHLISGAEDGLICVWDARRWECLKS), 121 to 160 (AHKGHVTFLSIHPSGRLALSVGTDKTLRTWNLVEGRSAFI), 202 to 240 (TNERRVSSVTFLSESVLTVAGDEEVVRFFDCDSLTCLSE), and 243 to 284 (AHEN…KVSP). Residues 309–392 (TKESPPAAAE…RKKKKIRMMQ (84 aa)) form a disordered region. Positions 325-351 (EQSRRNKEESGHAVQEEEKQPKPDTEK) are enriched in basic and acidic residues. Residues 355 to 368 (TGDSNKPTRGNSLV) are compositionally biased toward polar residues. Residues 381–392 (KKRKKKKIRMMQ) are compositionally biased toward basic residues.

Interacts with PAK1.

It localises to the nucleus. The protein resides in the nucleolus. Functionally, negatively regulates the PAK1 kinase. PAK1 is a member of the PAK kinase family, which has been shown to play a positive role in the regulation of signaling pathways involving MAPK8 and RELA. PAK1 exists as an inactive homodimer, which is activated by binding of small GTPases such as CDC42 to an N-terminal regulatory domain. PAK1IP1 also binds to the N-terminus of PAK1, and inhibits the specific activation of PAK1 by CDC42. May be involved in ribosomal large subunit assembly. The chain is p21-activated protein kinase-interacting protein 1 (PAK1IP1) from Bos taurus (Bovine).